The chain runs to 407 residues: Na(+)-translocating NADH-quinone reductase subunit F (407 aa).

A helical membrane pass occupies residues 3 to 23; it reads IILGVAMFTGIVMVLVLLILF. Positions 32 to 126 constitute a 2Fe-2S ferredoxin-type domain; sequence GDIAVEVNGD…NLKIELPEEI (95 aa). Residues cysteine 69, cysteine 75, cysteine 78, and cysteine 110 each contribute to the [2Fe-2S] cluster site. The FAD-binding FR-type domain maps to 129 to 269; that stretch reads VKKWECEVIS…SGPFGEFFAK (141 aa).

This sequence belongs to the NqrF family. Composed of six subunits; NqrA, NqrB, NqrC, NqrD, NqrE and NqrF. Requires [2Fe-2S] cluster as cofactor. The cofactor is FAD.

Its subcellular location is the cell inner membrane. The catalysed reaction is a ubiquinone + n Na(+)(in) + NADH + H(+) = a ubiquinol + n Na(+)(out) + NAD(+). Its function is as follows. NQR complex catalyzes the reduction of ubiquinone-1 to ubiquinol by two successive reactions, coupled with the transport of Na(+) ions from the cytoplasm to the periplasm. The first step is catalyzed by NqrF, which accepts electrons from NADH and reduces ubiquinone-1 to ubisemiquinone by a one-electron transfer pathway. The protein is Na(+)-translocating NADH-quinone reductase subunit F of Serratia proteamaculans (strain 568).